Here is a 399-residue protein sequence, read N- to C-terminus: 1-deoxy-D-xylulose 5-phosphate reductoisomerase (399 aa).

Positions 13, 14, 15, 16, and 127 each coordinate NADPH. Residue Lys128 participates in 1-deoxy-D-xylulose 5-phosphate binding. Residue Glu129 coordinates NADPH. Residue Asp153 coordinates Mn(2+). Ser154, Glu155, Ser187, and His210 together coordinate 1-deoxy-D-xylulose 5-phosphate. Glu155 serves as a coordination point for Mn(2+). NADPH is bound at residue Gly216. 4 residues coordinate 1-deoxy-D-xylulose 5-phosphate: Ser223, Asn228, Lys229, and Glu232. Glu232 is a Mn(2+) binding site.

It belongs to the DXR family. Requires Mg(2+) as cofactor. The cofactor is Mn(2+).

The catalysed reaction is 2-C-methyl-D-erythritol 4-phosphate + NADP(+) = 1-deoxy-D-xylulose 5-phosphate + NADPH + H(+). It participates in isoprenoid biosynthesis; isopentenyl diphosphate biosynthesis via DXP pathway; isopentenyl diphosphate from 1-deoxy-D-xylulose 5-phosphate: step 1/6. Functionally, catalyzes the NADPH-dependent rearrangement and reduction of 1-deoxy-D-xylulose-5-phosphate (DXP) to 2-C-methyl-D-erythritol 4-phosphate (MEP). The protein is 1-deoxy-D-xylulose 5-phosphate reductoisomerase of Bordetella petrii (strain ATCC BAA-461 / DSM 12804 / CCUG 43448).